The following is a 153-amino-acid chain: UPF0260 protein YcgN (153 aa).

It belongs to the UPF0260 family.

The polypeptide is UPF0260 protein YcgN (Salmonella typhi).